We begin with the raw amino-acid sequence, 309 residues long: D-galacturonate reductase (309 aa).

Tyr50 functions as the Proton donor in the catalytic mechanism. A substrate-binding site is contributed by His109. Position 210 to 264 (210 to 264 (SPLGSTGSPLMSADPVVKIAEKKGISPTTVLLSYHVNRGSTVLAKSVTPARIKAN)) interacts with NADP(+).

The protein belongs to the aldo/keto reductase family.

The catalysed reaction is L-galactonate + NADP(+) = aldehydo-D-galacturonate + NADPH + H(+). The protein operates within carbohydrate acid metabolism. In terms of biological role, mediates the reduction of D-galacturonate to L-galactonate, the first step in D-galacturonate catabolic process. Also has activity with D-glucuronate and DL-glyceraldehyde. No activity is observed with D-glucose, D-fructose, D-xylose, D-galactose, L-arabinose or D-mannose. Activity is seen only with NADPH and not with NADH. This chain is D-galacturonate reductase (gar1), found in Hypocrea jecorina (Trichoderma reesei).